A 952-amino-acid polypeptide reads, in one-letter code: Leucine--tRNA ligase (952 aa).

The 'HIGH' region motif lies at P66–H77. The short motif at K722–S726 is the 'KMSKS' region element. Residue K725 participates in ATP binding.

This sequence belongs to the class-I aminoacyl-tRNA synthetase family.

It is found in the cytoplasm. The enzyme catalyses tRNA(Leu) + L-leucine + ATP = L-leucyl-tRNA(Leu) + AMP + diphosphate. The sequence is that of Leucine--tRNA ligase from Corynebacterium glutamicum (strain R).